A 107-amino-acid chain; its full sequence is MSGFSLSDLESIVAERSKAPPEQSWTAKLVAGGQPKAAKKLGEEAIEAVMAAVTGDRDNLTYEAADVLYHLLVVLKIAEIPLENVMAELERRTAQSGLKEKASRQSS.

Belongs to the PRA-PH family.

Its subcellular location is the cytoplasm. The enzyme catalyses 1-(5-phospho-beta-D-ribosyl)-ATP + H2O = 1-(5-phospho-beta-D-ribosyl)-5'-AMP + diphosphate + H(+). It participates in amino-acid biosynthesis; L-histidine biosynthesis; L-histidine from 5-phospho-alpha-D-ribose 1-diphosphate: step 2/9. The chain is Phosphoribosyl-ATP pyrophosphatase from Rhizobium johnstonii (strain DSM 114642 / LMG 32736 / 3841) (Rhizobium leguminosarum bv. viciae).